The sequence spans 1420 residues: tRNA (32-2'-O)-methyltransferase regulator TRM732 (1420 aa).

The tract at residues 748–754 (RRSGGLP) is required for activity.

The protein belongs to the THADA family. As to quaternary structure, interacts with TRM7; for 2'-O-methylation of position 32 in substrate tRNAs.

The protein localises to the cytoplasm. Its function is as follows. Together with methyltransferase TRM7, methylates the 2'-O-ribose of nucleotides at position 32 of the anticodon loop of substrate tRNAs. The sequence is that of tRNA (32-2'-O)-methyltransferase regulator TRM732 (TRM732) from Saccharomyces cerevisiae (strain ATCC 204508 / S288c) (Baker's yeast).